The following is a 972-amino-acid chain: DNA cross-link repair 1A protein (972 aa).

Residues 14–80 (YKSIRKRKPQ…SEDLDPCKDD (67 aa)) form a disordered region. A compositionally biased stretch (polar residues) spans 23–37 (QSNPDSTSVSMQTVT). Basic residues predominate over residues 39-54 (GKCRPKRKGSGNRKKS). Residues 64–80 (SEQRLRPSEDLDPCKDD) show a composition bias toward basic and acidic residues. The UBZ4-type zinc finger occupies 105–135 (DGYCPSCQMPFSLLVVQTPRWHVAECLDTPG). The Zn(2+) site is built by Cys-108, Cys-111, His-126, and Cys-130. Disordered regions lie at residues 191–219 (KSSC…NNEC) and 552–623 (GEAC…TTDE). The segment covering 210–219 (NLKNVPNNEC) has biased composition (polar residues).

It belongs to the DNA repair metallo-beta-lactamase (DRMBL) family. Binds PIAS1.

It localises to the nucleus. The catalysed reaction is a beta-lactam + H2O = a substituted beta-amino acid. Functionally, may be required for DNA interstrand cross-link repair. In Gallus gallus (Chicken), this protein is DNA cross-link repair 1A protein (DCLRE1A).